A 583-amino-acid polypeptide reads, in one-letter code: Tetratricopeptide repeat protein 39C (583 aa).

A disordered region spans residues 1–22 (MAGSEQQRPRRRDDGDSDAAAA). TPR repeat units lie at residues 315–348 (SLFM…AVDQ), 353–386 (HVCL…SRWS), and 485–518 (GLKY…ELCR).

Belongs to the TTC39 family.

This is Tetratricopeptide repeat protein 39C (TTC39C) from Homo sapiens (Human).